The chain runs to 86 residues: Small ribosomal subunit protein bS20 (86 aa).

The protein belongs to the bacterial ribosomal protein bS20 family.

Binds directly to 16S ribosomal RNA. The polypeptide is Small ribosomal subunit protein bS20 (Exiguobacterium sibiricum (strain DSM 17290 / CCUG 55495 / CIP 109462 / JCM 13490 / 255-15)).